A 117-amino-acid chain; its full sequence is Ribosomal silencing factor RsfS (117 aa).

Belongs to the Iojap/RsfS family. Interacts with ribosomal protein uL14 (rplN).

Its subcellular location is the cytoplasm. Its function is as follows. Functions as a ribosomal silencing factor. Interacts with ribosomal protein uL14 (rplN), blocking formation of intersubunit bridge B8. Prevents association of the 30S and 50S ribosomal subunits and the formation of functional ribosomes, thus repressing translation. This is Ribosomal silencing factor RsfS from Halalkalibacterium halodurans (strain ATCC BAA-125 / DSM 18197 / FERM 7344 / JCM 9153 / C-125) (Bacillus halodurans).